Reading from the N-terminus, the 130-residue chain is MAQVQYYGTGRRKSSVARVRLVPGEGRVIINGRDFENYIPFAALREVVKQPLVATETLGNYDVLVNVNGGGYTGQAGAIRHGISRALLKADPEYRLTLKRAGLLTRDARMKERKKYGLKGARRAPQFSKR.

It belongs to the universal ribosomal protein uS9 family.

The polypeptide is Small ribosomal subunit protein uS9 (Bacillus thuringiensis subsp. konkukian (strain 97-27)).